A 269-amino-acid chain; its full sequence is Eukaryotic translation initiation factor 3 subunit G (269 aa).

The segment at 140–181 is disordered; that stretch reads AIGGGDMSAQGGSGSGRYVPPSLRAGARDPSSNAYQDQRERD. Residues 141–154 show a composition bias toward gly residues; it reads IGGGDMSAQGGSGS. S161 carries the post-translational modification Phosphoserine. Positions 184-263 constitute an RRM domain; that stretch reads KTIRLTQVNE…FMLHAEWSKP (80 aa).

It belongs to the eIF-3 subunit G family. In terms of assembly, component of the eukaryotic translation initiation factor 3 (eIF-3) complex.

The protein localises to the cytoplasm. In terms of biological role, RNA-binding component of the eukaryotic translation initiation factor 3 (eIF-3) complex, which is involved in protein synthesis of a specialized repertoire of mRNAs and, together with other initiation factors, stimulates binding of mRNA and methionyl-tRNAi to the 40S ribosome. The eIF-3 complex specifically targets and initiates translation of a subset of mRNAs involved in cell proliferation. This subunit can bind 18S rRNA. This Kluyveromyces lactis (strain ATCC 8585 / CBS 2359 / DSM 70799 / NBRC 1267 / NRRL Y-1140 / WM37) (Yeast) protein is Eukaryotic translation initiation factor 3 subunit G.